A 983-amino-acid chain; its full sequence is Probable beta-galactosidase C (983 aa).

An N-terminal signal peptide occupies residues 1 to 23 (MRIFSFLFLLLLGILTGQGLVSG). Positions 82, 127, 128, 129, and 187 each coordinate substrate. Glu188 acts as the Proton donor in catalysis. N-linked (GlcNAc...) asparagine glycosylation is present at Asn197. Tyr251 contacts substrate. A disulfide bridge connects residues Cys257 and Cys304. Asn276 carries N-linked (GlcNAc...) asparagine glycosylation. Glu287 serves as the catalytic Nucleophile. Tyr353 contacts substrate. 10 N-linked (GlcNAc...) asparagine glycosylation sites follow: Asn391, Asn434, Asn466, Asn516, Asn601, Asn676, Asn714, Asn719, Asn758, and Asn804.

It belongs to the glycosyl hydrolase 35 family.

The protein localises to the secreted. The enzyme catalyses Hydrolysis of terminal non-reducing beta-D-galactose residues in beta-D-galactosides.. In terms of biological role, cleaves beta-linked terminal galactosyl residues from gangliosides, glycoproteins, and glycosaminoglycans. This is Probable beta-galactosidase C (lacC) from Aspergillus fumigatus (strain CBS 144.89 / FGSC A1163 / CEA10) (Neosartorya fumigata).